The chain runs to 214 residues: Guanylate kinase (214 aa).

The Guanylate kinase-like domain occupies 12–191; sequence GLMLVMSSPS…SIAAVQAILA (180 aa). Position 19–26 (19–26) interacts with ATP; that stretch reads SPSGAGKT.

Belongs to the guanylate kinase family.

The protein resides in the cytoplasm. The catalysed reaction is GMP + ATP = GDP + ADP. Functionally, essential for recycling GMP and indirectly, cGMP. In Paramagnetospirillum magneticum (strain ATCC 700264 / AMB-1) (Magnetospirillum magneticum), this protein is Guanylate kinase.